The following is a 149-amino-acid chain: Calmodulin (149 aa).

4 consecutive EF-hand domains span residues 8–43 (EQISEFKEAFSLFDKDGDGTITTKELGTVMRSLGQN), 44–79 (PTEAELQDMINEVDQDGSGTIDFPEFLTLMARKMQD), 81–116 (DSEEEIKEAFRVFDKDGNGFISAAELRHIMTNLGEK), and 117–149 (LTDEEVDEMIREADVDGDGQINYEEFVKMMMSK). Ca(2+)-binding residues include Asp21, Asp23, Asp25, Thr27, Glu32, Asp57, Asp59, Ser61, Thr63, Glu68, Asp94, Asp96, Asn98, and Glu105. The residue at position 116 (Lys116) is an N6,N6,N6-trimethyllysine. Asp130, Asp132, Asp134, Gln136, and Glu141 together coordinate Ca(2+).

It belongs to the calmodulin family.

In terms of biological role, calmodulin mediates the control of a large number of enzymes, ion channels and other proteins by Ca(2+). Among the enzymes to be stimulated by the calmodulin-Ca(2+) complex are a number of protein kinases and phosphatases. The chain is Calmodulin from Trypanosoma brucei brucei.